A 344-amino-acid chain; its full sequence is MQTLTIIRPDDMHLHLRDGDALKAVAPYTARQMGRAVIMPNLKPPVVSVADALAYKARIMAALPEGSAFEPLMTLYLTDNATPELVREAKAAGIVAFKLYPAGATTNSDSGVTDLFKLIPVLEEMAKQGILFLVHGEVTDPEIDIFDREAAFIGRVMKPVLAQVPNLKVVFEHITTAEAARLVLEAGDNVAATVTPQHLLLNRNDLLVGGVRPHHFCLPVLKRETHRQALVAAVTGEKAHKFFLGTDSAPHAKSAKENACGCAGMFSAMTAIELYAEVFEKAGALDKLEAFASKNGARFYGIPENTDTITLVKQSQTVPASVPYGDGELVPMRAGGEIGWTVQY.

Residues histidine 13 and histidine 15 each coordinate Zn(2+). Residues 15–17 (HLR) and asparagine 41 contribute to the substrate site. Zn(2+)-binding residues include lysine 98, histidine 135, and histidine 173. Lysine 98 is modified (N6-carboxylysine). Histidine 135 contributes to the substrate binding site. Leucine 218 lines the substrate pocket. Aspartate 247 is a binding site for Zn(2+). The active site involves aspartate 247. Residues histidine 251 and alanine 263 each contribute to the substrate site.

Belongs to the metallo-dependent hydrolases superfamily. DHOase family. Class II DHOase subfamily. Homodimer. The cofactor is Zn(2+).

It carries out the reaction (S)-dihydroorotate + H2O = N-carbamoyl-L-aspartate + H(+). It functions in the pathway pyrimidine metabolism; UMP biosynthesis via de novo pathway; (S)-dihydroorotate from bicarbonate: step 3/3. In terms of biological role, catalyzes the reversible cyclization of carbamoyl aspartate to dihydroorotate. The polypeptide is Dihydroorotase (Neisseria meningitidis serogroup B (strain ATCC BAA-335 / MC58)).